The sequence spans 275 residues: Phosphate import ATP-binding protein PstB 3 (275 aa).

Residues Met-1–Pro-26 form a disordered region. A compositionally biased stretch (polar residues) spans Ser-9–Asp-18. The region spanning Val-31–Ile-270 is the ABC transporter domain. Gly-63–Ser-70 is an ATP binding site.

The protein belongs to the ABC transporter superfamily. Phosphate importer (TC 3.A.1.7) family. In terms of assembly, the complex is composed of two ATP-binding proteins (PstB), two transmembrane proteins (PstC and PstA) and a solute-binding protein (PstS).

The protein localises to the cell membrane. It catalyses the reaction phosphate(out) + ATP + H2O = ADP + 2 phosphate(in) + H(+). Its function is as follows. Part of the ABC transporter complex PstSACB involved in phosphate import. Responsible for energy coupling to the transport system. This chain is Phosphate import ATP-binding protein PstB 3, found in Natronomonas pharaonis (strain ATCC 35678 / DSM 2160 / CIP 103997 / JCM 8858 / NBRC 14720 / NCIMB 2260 / Gabara) (Halobacterium pharaonis).